The sequence spans 369 residues: Large ribosomal subunit protein uL4 (369 aa).

Thr2 carries the N-acetylthreonine modification.

This sequence belongs to the universal ribosomal protein uL4 family.

This is Large ribosomal subunit protein uL4 (rpl4) from Dictyostelium discoideum (Social amoeba).